The primary structure comprises 308 residues: Cytochrome b (308 aa).

The next 4 helical transmembrane spans lie at 1–21 (FGSLLGICLMTQIITGLLLAM), 45–66 (WLIRNLHANGASFFFICIYLHI), 81–101 (WNIGVILLLTLMATAFVGYVL), and 146–166 (FFALHFLLHFIIAGLTFIHLT). Residues histidine 51 and histidine 65 each coordinate heme b. Positions 150 and 164 each coordinate heme b. Residue histidine 169 coordinates a ubiquinone. 3 helical membrane-spanning segments follow: residues 194-214 (TKDALGFILLLFPLMTLAMFS), 256-276 (LGGVLALAASVLILLLIPLLH), and 288-308 (LSQFLFWTLVMNLLILTWIGS).

The protein belongs to the cytochrome b family. In terms of assembly, the cytochrome bc1 complex contains 11 subunits: 3 respiratory subunits (MT-CYB, CYC1 and UQCRFS1), 2 core proteins (UQCRC1 and UQCRC2) and 6 low-molecular weight proteins (UQCRH/QCR6, UQCRB/QCR7, UQCRQ/QCR8, UQCR10/QCR9, UQCR11/QCR10 and a cleavage product of UQCRFS1). This cytochrome bc1 complex then forms a dimer. Heme b serves as cofactor.

The protein resides in the mitochondrion inner membrane. Its function is as follows. Component of the ubiquinol-cytochrome c reductase complex (complex III or cytochrome b-c1 complex) that is part of the mitochondrial respiratory chain. The b-c1 complex mediates electron transfer from ubiquinol to cytochrome c. Contributes to the generation of a proton gradient across the mitochondrial membrane that is then used for ATP synthesis. In Zaratornis stresemanni (White-cheeked cotinga), this protein is Cytochrome b (MT-CYB).